A 486-amino-acid polypeptide reads, in one-letter code: Serine/threonine-protein kinase 4 (486 aa).

Residues F29–V280 enclose the Protein kinase domain. ATP contacts are provided by residues L35 to V43 and K58. The Proton acceptor role is filled by D148. The residue at position 182 (T182) is a Phosphothreonine; by autocatalysis. A coiled-coil region spans residues I288–T324. The segment at E305–A332 is disordered. The span at D312–D325 shows a compositional bias: acidic residues. Positions Y432–K479 constitute an SARAH domain.

It belongs to the protein kinase superfamily. STE Ser/Thr protein kinase family. STE20 subfamily. As to quaternary structure, homodimer; mediated via the coiled-coil region. Mg(2+) is required as a cofactor. Post-translationally, proteolytically cleaved by caspase-3 during apoptosis at Asp-325 resulting in a 37 kDa form. Proteolytic cleavage results in kinase activation and nuclear translocation of the truncated form (MST1/N).

The protein resides in the cytoplasm. It localises to the nucleus. It carries out the reaction L-seryl-[protein] + ATP = O-phospho-L-seryl-[protein] + ADP + H(+). It catalyses the reaction L-threonyl-[protein] + ATP = O-phospho-L-threonyl-[protein] + ADP + H(+). Its activity is regulated as follows. The C-terminal non-catalytic region inhibits the kinase activity, the enzyme is activated by caspase-cleavage. Homodimerization and autophosphorylation of Thr-182 is also required for full activation. Functionally, stress-activated, pro-apoptotic kinase which, following caspase-cleavage, enters the nucleus and induces chromatin condensation followed by internucleosomal DNA fragmentation. Key component of the Hippo signaling pathway which plays a pivotal role in organ size control and tumor suppression by restricting proliferation and promoting apoptosis. The core of this pathway is composed of a kinase cascade wherein STK3/MST2 and STK4/MST1, in complex with its regulatory protein SAV1, phosphorylates and activates LATS1/2 in complex with its regulatory protein MOB1, which in turn phosphorylates and inactivates YAP1 oncoprotein and WWTR1/TAZ. Phosphorylation of YAP1 by LATS2 inhibits its translocation into the nucleus to regulate cellular genes important for cell proliferation, cell death, and cell migration. Phosphorylates 'Ser-14' of histone H2B (H2BS14ph) during apoptosis. Phosphorylates FOXO3 upon oxidative stress, which results in its nuclear translocation and cell death initiation. The polypeptide is Serine/threonine-protein kinase 4 (STK4) (Gallus gallus (Chicken)).